Reading from the N-terminus, the 369-residue chain is N-succinylamino acid racemase (369 aa).

The active-site Proton donor is lysine 163. Mg(2+)-binding residues include aspartate 188, glutamate 213, and aspartate 238. Lysine 262 acts as the Proton acceptor in catalysis.

It belongs to the mandelate racemase/muconate lactonizing enzyme family. MenC type 2 subfamily. As to quaternary structure, homooctamer. Tetramer of dimers. The cofactor is a divalent metal cation.

It catalyses the reaction (1R,6R)-6-hydroxy-2-succinyl-cyclohexa-2,4-diene-1-carboxylate = 2-succinylbenzoate + H2O. In terms of biological role, acts as a N-succinylamino acid racemase (NSAR) that catalyzes the racemization of N-succinyl-L-phenylglycine. Also converts 2-succinyl-6-hydroxy-2,4-cyclohexadiene-1-carboxylate (SHCHC) to 2-succinylbenzoate (OSB). Catalyzes both N-succinylamino acid racemization and OSB synthesis at equivalent rates. However, NSAR activity is probably the protein's biological function, because menaquinone biosynthesis genes are missing in this species. In Thermus thermophilus (strain ATCC 27634 / DSM 579 / HB8), this protein is N-succinylamino acid racemase.